The following is a 236-amino-acid chain: Purine nucleoside phosphorylase DeoD-type (236 aa).

Histidine 5 lines the a purine D-ribonucleoside pocket. Phosphate contacts are provided by residues glycine 21, arginine 25, arginine 44, and 88 to 91 (RVGT). A purine D-ribonucleoside is bound by residues 180–182 (EME) and 204–205 (SD). Residue aspartate 205 is the Proton donor of the active site.

Belongs to the PNP/UDP phosphorylase family. In terms of assembly, homohexamer; trimer of homodimers.

The catalysed reaction is a purine D-ribonucleoside + phosphate = a purine nucleobase + alpha-D-ribose 1-phosphate. The enzyme catalyses a purine 2'-deoxy-D-ribonucleoside + phosphate = a purine nucleobase + 2-deoxy-alpha-D-ribose 1-phosphate. In terms of biological role, catalyzes the reversible phosphorolytic breakdown of the N-glycosidic bond in the beta-(deoxy)ribonucleoside molecules, with the formation of the corresponding free purine bases and pentose-1-phosphate. The polypeptide is Purine nucleoside phosphorylase DeoD-type (Shewanella sp. (strain MR-4)).